The primary structure comprises 423 residues: UPF0229 protein Pfl01_5140 (423 aa).

A disordered region spans residues 83 to 108; that stretch reads TAGEHIARPPGGGGGRGPGKAGNSGE. Residues 92-107 show a composition bias toward gly residues; it reads PGGGGGRGPGKAGNSG.

This sequence belongs to the UPF0229 family.

The sequence is that of UPF0229 protein Pfl01_5140 from Pseudomonas fluorescens (strain Pf0-1).